We begin with the raw amino-acid sequence, 729 residues long: Carbon monoxide dehydrogenase/acetyl-CoA synthase subunit alpha (729 aa).

Cys-506, Cys-509, Cys-518, and Cys-528 together coordinate [4Fe-4S] cluster. Ni(2+) is bound at residue Cys-509. Residues Cys-595, Gly-596, and Cys-597 each contribute to the Ni(2+) site.

As to quaternary structure, tetramer of two alpha and two beta chains. Ni cation serves as cofactor. Requires [4Fe-4S] cluster as cofactor.

The enzyme catalyses Co(I)-[corrinoid Fe-S protein] + acetyl-CoA + H(+) = methyl-Co(III)-[corrinoid Fe-S protein] + CO + CoA. In terms of biological role, the beta subunit generates CO from CO(2), while the alpha subunit (this protein) combines the CO with CoA and a methyl group to form acetyl-CoA. The methyl group, which is incorporated into acetyl-CoA, is transferred to the alpha subunit by a corrinoid iron-sulfur protein. The polypeptide is Carbon monoxide dehydrogenase/acetyl-CoA synthase subunit alpha (Moorella thermoacetica (Clostridium thermoaceticum)).